A 97-amino-acid polypeptide reads, in one-letter code: MGSRFFLALFLVLLVLGNEVQGTQEDDPSSPALLDTMQESFFSYWSSARAAAEGLYQKTYLTSVDEKLRDMYSKSSAAMSTYAGIFTDQLLTLLKGE.

Residues 1–22 (MGSRFFLALFLVLLVLGNEVQG) form the signal peptide. The lipid binding stretch occupies residues 63–71 (SVDEKLRDM). The interval 75–97 (SSAAMSTYAGIFTDQLLTLLKGE) is lipoprotein lipase cofactor.

Belongs to the apolipoprotein C2 family. Post-translationally, proapolipoprotein C-II is synthesized as a sialic acid containing glycoprotein which is subsequently desialylated prior to its proteolytic processing. Proapolipoprotein C-II, the major form found in plasma undergoes proteolytic cleavage of its N-terminal hexapeptide to generate the mature form apolipoprotein C-II, which occurs as the minor form in plasma.

The protein resides in the secreted. Functionally, component of chylomicrons, very low-density lipoproteins (VLDL), low-density lipoproteins (LDL), and high-density lipoproteins (HDL) in plasma. Plays an important role in lipoprotein metabolism as an activator of lipoprotein lipase. This chain is Apolipoprotein C-II (Apoc2), found in Grammomys surdaster (African woodland thicket rat).